The sequence spans 467 residues: MSKVASIVDVLQGKVAIGETVTVRGWVRTRRDSKAGLSFLAVYDGSCFDPIQAIINNDIENYESEILRLTTGCSVIVTGKVVESPAEGQAVELQAEKVEVTGFVEDPDTYPMAAKRHSIEYLREVAHLRPRTNIIGAVARVRHCLSQAIHRFFHEQGFYWVATPLITASDTEGAGEMFRVSTLDLENLPRSENGKVDFSQDFFGKESFLTVSGQLNGETYACALSKIYTFGPTFRAENSNTTRHLAEFWMVEPEVAFATLADNAKLAEDMLKYVFRAVLAERKDDLQFFEKHVDKDVITRLENFVNSDFAQIDYTDAIDVLLKSGKKFEFPVSWGIDLSSEHERFLAEEYFKSPVVVKNYPKDIKAFYMRLNDDGKTVAAMDVLAPGIGEIIGGSQREERLEVLDKRMEEMGLNPDDYWWYRDLRKYGSVPHSGFGLGFERLIVYVTGVQNIRDVIPFPRAPRNANF.

This sequence belongs to the class-II aminoacyl-tRNA synthetase family. As to quaternary structure, homodimer.

Its subcellular location is the cytoplasm. It catalyses the reaction tRNA(Asn) + L-asparagine + ATP = L-asparaginyl-tRNA(Asn) + AMP + diphosphate + H(+). This is Asparagine--tRNA ligase from Haemophilus influenzae (strain PittGG).